Reading from the N-terminus, the 478-residue chain is Cytochrome c-552 (478 aa).

The first 26 residues, 1-26, serve as a signal peptide directing secretion; that stretch reads MARKTLRARRFFSLIFPFFFITSVYA. Residue His-94 participates in heme c binding. Residues Cys-122, Cys-125, and Lys-126 each coordinate heme. Residues Cys-160, Cys-163, His-164, Cys-209, Cys-212, and His-213 each contribute to the heme c site. Residues Glu-215, Tyr-216, Lys-261, and Gln-263 each contribute to the Ca(2+) site. Substrate is bound at residue Tyr-216. Residue His-264 participates in substrate binding. 9 residues coordinate heme c: His-275, Cys-282, Cys-285, His-286, His-301, Cys-314, Cys-317, His-318, and His-393.

Belongs to the cytochrome c-552 family. Ca(2+) serves as cofactor. Requires heme c as cofactor.

Its subcellular location is the periplasm. It catalyses the reaction 6 Fe(III)-[cytochrome c] + NH4(+) + 2 H2O = 6 Fe(II)-[cytochrome c] + nitrite + 8 H(+). The protein operates within nitrogen metabolism; nitrate reduction (assimilation). Its function is as follows. Catalyzes the reduction of nitrite to ammonia, consuming six electrons in the process. The sequence is that of Cytochrome c-552 from Salmonella schwarzengrund (strain CVM19633).